A 368-amino-acid chain; its full sequence is Chaperone protein DnaJ (368 aa).

In terms of domain architecture, J spans 5-70 (DYYEVLGVSK…EKRSMYDRMG (66 aa)). Residues 132–210 (GVKKTITFTA…CHGSGVADRQ (79 aa)) form a CR-type zinc finger. Zn(2+)-binding residues include Cys145, Cys148, Cys162, Cys165, Cys184, Cys187, Cys198, and Cys201. 4 CXXCXGXG motif repeats span residues 145-152 (CEVCDGKG), 162-169 (CRTCHGTG), 184-191 (CGTCRGQG), and 198-205 (CQSCHGSG). A disordered region spans residues 349–368 (DGDEHSSSPKKKSFFDRLFD). Residues 350-368 (GDEHSSSPKKKSFFDRLFD) are compositionally biased toward basic and acidic residues.

This sequence belongs to the DnaJ family. Homodimer. Requires Zn(2+) as cofactor.

Its subcellular location is the cytoplasm. Participates actively in the response to hyperosmotic and heat shock by preventing the aggregation of stress-denatured proteins and by disaggregating proteins, also in an autonomous, DnaK-independent fashion. Unfolded proteins bind initially to DnaJ; upon interaction with the DnaJ-bound protein, DnaK hydrolyzes its bound ATP, resulting in the formation of a stable complex. GrpE releases ADP from DnaK; ATP binding to DnaK triggers the release of the substrate protein, thus completing the reaction cycle. Several rounds of ATP-dependent interactions between DnaJ, DnaK and GrpE are required for fully efficient folding. Also involved, together with DnaK and GrpE, in the DNA replication of plasmids through activation of initiation proteins. This is Chaperone protein DnaJ from Acinetobacter baylyi (strain ATCC 33305 / BD413 / ADP1).